The chain runs to 152 residues: Nucleoside diphosphate kinase B (152 aa).

Residues 1-66 (MAHQERTFIA…DRPFYPGLVK (66 aa)) form an interaction with AKAP13 region. Positions 12, 60, 88, 94, 105, and 115 each coordinate ATP. H118 acts as the Pros-phosphohistidine intermediate in catalysis.

It belongs to the NDK family. Hexamer of two different chains: An and B (A6, A5B, A4B2, A3B3, A2B4, AB5, B6). Interacts with CAPN8. Interacts with AKAP13. Interacts with ITGB1BP1 (via C-terminal domain region). Interacts with BCL2L10. Mg(2+) is required as a cofactor. In terms of tissue distribution, ubiquitous.

It localises to the cytoplasm. Its subcellular location is the cell projection. The protein localises to the lamellipodium. It is found in the ruffle. The protein resides in the nucleus. The enzyme catalyses a 2'-deoxyribonucleoside 5'-diphosphate + ATP = a 2'-deoxyribonucleoside 5'-triphosphate + ADP. It carries out the reaction a ribonucleoside 5'-diphosphate + ATP = a ribonucleoside 5'-triphosphate + ADP. The catalysed reaction is ATP + protein L-histidine = ADP + protein N-phospho-L-histidine.. Functionally, major role in the synthesis of nucleoside triphosphates other than ATP. The ATP gamma phosphate is transferred to the NDP beta phosphate via a ping-pong mechanism, using a phosphorylated active-site intermediate. Negatively regulates Rho activity by interacting with AKAP13/LBC. Acts as a transcriptional activator of the MYC gene; binds DNA non-specifically. Binds to both single-stranded guanine- and cytosine-rich strands within the nuclease hypersensitive element (NHE) III(1) region of the MYC gene promoter. Does not bind to duplex NHE III(1). Has G-quadruplex (G4) DNA-binding activity, which is independent of its nucleotide-binding and kinase activity. Binds both folded and unfolded G4 with similar low nanomolar affinities. Stabilizes folded G4s regardless of whether they are prefolded or not. Exhibits histidine protein kinase activity. The polypeptide is Nucleoside diphosphate kinase B (NME2) (Canis lupus familiaris (Dog)).